The primary structure comprises 249 residues: MVSFDATEALAPYREGRGYGAIVFDRERLRQADASLFSPQSWGDRARPVDKGGRGGAWFVDAPFGRSVLRQYLRGGMAARVSRDRYLWKGAGRTRSFAEFRLMRELIKRKLPVPRPLAACYLREGLGYRAALLMERLENVRSLADHAQLAGRGAPWEATGQLIARFHRAGLDHPDLNAHNILFDAGGHGWLIDFDRGVLRIPATRWRERNLKRLHRSLLKLRGNRSGEDVDKDYERLHRAYELAWGRGY.

The active site involves Asp-175.

The protein belongs to the protein kinase superfamily. KdkA/RfaP family.

The protein resides in the cell inner membrane. It catalyses the reaction an alpha-Kdo-(2-&gt;6)-lipid IVA + ATP = a 4-O-phospho-alpha-Kdo-(2-&gt;6)-lipid IVA + ADP + H(+). It participates in bacterial outer membrane biogenesis; LPS core biosynthesis. In terms of biological role, catalyzes the ATP-dependent phosphorylation of the 3-deoxy-D-manno-octulosonic acid (Kdo) residue in Kdo-lipid IV(A) at the 4-OH position. This Xanthomonas oryzae pv. oryzae (strain PXO99A) protein is 3-deoxy-D-manno-octulosonic acid kinase.